The chain runs to 71 residues: Large ribosomal subunit protein bL31 (71 aa).

Zn(2+)-binding residues include cysteine 16, cysteine 18, cysteine 37, and cysteine 40.

It belongs to the bacterial ribosomal protein bL31 family. Type A subfamily. As to quaternary structure, part of the 50S ribosomal subunit. Zn(2+) serves as cofactor.

In terms of biological role, binds the 23S rRNA. In Pseudomonas entomophila (strain L48), this protein is Large ribosomal subunit protein bL31.